The primary structure comprises 52 residues: Large ribosomal subunit protein eL39 (52 aa).

Belongs to the eukaryotic ribosomal protein eL39 family.

In Tetrahymena thermophila (strain SB210), this protein is Large ribosomal subunit protein eL39 (RPL39).